Consider the following 85-residue polypeptide: MAKEELIEMSGMVVEVLPDSRFRVTLDNGHNLVAYSAGKMRKHHIRILCGDKVSLELSPYDLSKGRITFRHLEGRGPLGPQRRRR.

One can recognise an S1-like domain in the interval 1–72 (MAKEELIEMS…SKGRITFRHL (72 aa)).

It belongs to the IF-1 family. In terms of assembly, component of the 30S ribosomal translation pre-initiation complex which assembles on the 30S ribosome in the order IF-2 and IF-3, IF-1 and N-formylmethionyl-tRNA(fMet); mRNA recruitment can occur at any time during PIC assembly.

It is found in the cytoplasm. Its function is as follows. One of the essential components for the initiation of protein synthesis. Stabilizes the binding of IF-2 and IF-3 on the 30S subunit to which N-formylmethionyl-tRNA(fMet) subsequently binds. Helps modulate mRNA selection, yielding the 30S pre-initiation complex (PIC). Upon addition of the 50S ribosomal subunit IF-1, IF-2 and IF-3 are released leaving the mature 70S translation initiation complex. In Aromatoleum aromaticum (strain DSM 19018 / LMG 30748 / EbN1) (Azoarcus sp. (strain EbN1)), this protein is Translation initiation factor IF-1 1.